The sequence spans 322 residues: UDP-N-acetylenolpyruvoylglucosamine reductase (322 aa).

One can recognise an FAD-binding PCMH-type domain in the interval Arg-36–Gly-202. Arg-182 is a catalytic residue. The Proton donor role is filled by Ser-231. Glu-301 is an active-site residue.

This sequence belongs to the MurB family. FAD serves as cofactor.

It is found in the cytoplasm. It catalyses the reaction UDP-N-acetyl-alpha-D-muramate + NADP(+) = UDP-N-acetyl-3-O-(1-carboxyvinyl)-alpha-D-glucosamine + NADPH + H(+). The protein operates within cell wall biogenesis; peptidoglycan biosynthesis. Its function is as follows. Cell wall formation. This chain is UDP-N-acetylenolpyruvoylglucosamine reductase, found in Brucella canis (strain ATCC 23365 / NCTC 10854 / RM-666).